The sequence spans 359 residues: MAADGKNVLIMAGGTGGHVFPALACAREFQARGYTVHWLGTPRGIENELVPQAGLSLHLIQVSGLRGKGKLSLLKAPFTLVKAVLQARRIIGQLKPVCVIGFGGYVTGPGGVAARLCGVPLVIHEQNARAGTANRLLVPLSARVCEAFPGTFEAGEKLRTTGNPVRPELFMDAQRAPLGERRARLLVMGGSLGAEPLNKLLPKALSEVPADLRPEVFHQAGKHHAPITAERYQEAGVEAQVEPFIKDMAHAYGWADLVVCRAGALTVSELAAAGLPSMLVPLPHAIDDHQTHNAQYLAREGAAFLMPQATTGAAQLAERLNEVLMQPEKLNTMARTARRLAKPSATSTVVDICLEVAHG.

UDP-N-acetyl-alpha-D-glucosamine contacts are provided by residues 15 to 17, Asn-127, Arg-166, Ser-191, Ile-245, 264 to 269, and Gln-290; these read TGG and ALTVSE.

Belongs to the glycosyltransferase 28 family. MurG subfamily.

It is found in the cell inner membrane. The enzyme catalyses di-trans,octa-cis-undecaprenyl diphospho-N-acetyl-alpha-D-muramoyl-L-alanyl-D-glutamyl-meso-2,6-diaminopimeloyl-D-alanyl-D-alanine + UDP-N-acetyl-alpha-D-glucosamine = di-trans,octa-cis-undecaprenyl diphospho-[N-acetyl-alpha-D-glucosaminyl-(1-&gt;4)]-N-acetyl-alpha-D-muramoyl-L-alanyl-D-glutamyl-meso-2,6-diaminopimeloyl-D-alanyl-D-alanine + UDP + H(+). It functions in the pathway cell wall biogenesis; peptidoglycan biosynthesis. Cell wall formation. Catalyzes the transfer of a GlcNAc subunit on undecaprenyl-pyrophosphoryl-MurNAc-pentapeptide (lipid intermediate I) to form undecaprenyl-pyrophosphoryl-MurNAc-(pentapeptide)GlcNAc (lipid intermediate II). This is UDP-N-acetylglucosamine--N-acetylmuramyl-(pentapeptide) pyrophosphoryl-undecaprenol N-acetylglucosamine transferase from Pseudomonas putida (strain W619).